The sequence spans 98 residues: Beta-elicitin MGM-beta (98 aa).

Disulfide bonds link C3–C71, C27–C56, and C51–C95.

It belongs to the elicitin family.

The protein resides in the secreted. Induces local and distal defense responses (incompatible hypersensitive reaction) in plants from the solanaceae and cruciferae families. Elicits leaf necrosis and causes the accumulation of pathogenesis-related proteins. Might interact with the lipidic molecules of the plasma membrane. The chain is Beta-elicitin MGM-beta from Phytophthora megasperma (Potato pink rot fungus).